The sequence spans 396 residues: Ribosomal RNA large subunit methyltransferase I (396 aa).

Positions 2-81 (TVRLFLAKGR…EEINIEFFIR (80 aa)) constitute a PUA domain.

Belongs to the methyltransferase superfamily. RlmI family.

Its subcellular location is the cytoplasm. It catalyses the reaction cytidine(1962) in 23S rRNA + S-adenosyl-L-methionine = 5-methylcytidine(1962) in 23S rRNA + S-adenosyl-L-homocysteine + H(+). Functionally, specifically methylates the cytosine at position 1962 (m5C1962) of 23S rRNA. This chain is Ribosomal RNA large subunit methyltransferase I, found in Serratia proteamaculans (strain 568).